A 750-amino-acid polypeptide reads, in one-letter code: Photosystem I P700 chlorophyll a apoprotein A1 (750 aa).

8 helical membrane passes run 70–93 (VFSA…FHGA), 156–179 (LYCT…FHYH), 195–219 (LNHH…HVSL), 291–309 (IAHH…GHMY), 346–369 (WHAQ…HHMY), 385–411 (LSLF…IFMV), 433–455 (AIIS…LYIH), and 531–549 (FLVH…LILL). [4Fe-4S] cluster contacts are provided by C573 and C582. Transmembrane regions (helical) follow at residues 589–610 (HVFL…HFSW) and 664–686 (LSAY…MFLF). A chlorophyll a'-binding site is contributed by H675. M683 and Y691 together coordinate chlorophyll a. W692 serves as a coordination point for phylloquinone. A helical membrane pass occupies residues 724-744 (AVGVTHYLLGGIATTWAFFLA).

The protein belongs to the PsaA/PsaB family. The PsaA/B heterodimer binds the P700 chlorophyll special pair and subsequent electron acceptors. PSI consists of a core antenna complex that captures photons, and an electron transfer chain that converts photonic excitation into a charge separation. The eukaryotic PSI reaction center is composed of at least 11 subunits. P700 is a chlorophyll a/chlorophyll a' dimer, A0 is one or more chlorophyll a, A1 is one or both phylloquinones and FX is a shared 4Fe-4S iron-sulfur center. serves as cofactor.

It localises to the plastid. The protein localises to the chloroplast thylakoid membrane. The catalysed reaction is reduced [plastocyanin] + hnu + oxidized [2Fe-2S]-[ferredoxin] = oxidized [plastocyanin] + reduced [2Fe-2S]-[ferredoxin]. Functionally, psaA and PsaB bind P700, the primary electron donor of photosystem I (PSI), as well as the electron acceptors A0, A1 and FX. PSI is a plastocyanin-ferredoxin oxidoreductase, converting photonic excitation into a charge separation, which transfers an electron from the donor P700 chlorophyll pair to the spectroscopically characterized acceptors A0, A1, FX, FA and FB in turn. Oxidized P700 is reduced on the lumenal side of the thylakoid membrane by plastocyanin. This Triticum aestivum (Wheat) protein is Photosystem I P700 chlorophyll a apoprotein A1.